Here is a 303-residue protein sequence, read N- to C-terminus: MISASALNSELINKIAQDFAQATGLAVVVVNIHGDEISELFNFTPFCQLMRQHPQHSTRCRMSDRCGGLEASKSDQPCIYRCHAGLTDFSIPLVIAGHLVGFVLCGQVRLSNDVELVNILNVDDRWQADPELLNEFRNVPEMDYSRVIASADLLKLIVENCLKKQLNFVVIKDNPQQSEANKTTRGPTPHDSKMKKALRYIDAHLSDDLRLEDVASHVYLSPYYFSKLFKKYQGIGFNAWVNRQRMVSARELLCHSDWSIASIARNLGFSQTSYFCKVFRQTYQVTPQAYRQQINENSHPPSL.

An HTH araC/xylS-type domain is found at 195–293 (KKALRYIDAH…QVTPQAYRQQ (99 aa)). DNA-binding regions (H-T-H motif) lie at residues 212–233 (EDVASHVYLSPYYFSKLFKKYQ) and 260–283 (IASIARNLGFSQTSYFCKVFRQTY).

It functions in the pathway cofactor biosynthesis; adenosylcobalamin biosynthesis [regulation]. Its pathway is polyol metabolism; 1,2-propanediol degradation [regulation]. Functionally, positive regulatory protein of pdu and cob operons. Positively autoregulates its own expression. The sequence is that of Regulatory protein PocR (pocR) from Salmonella typhimurium (strain LT2 / SGSC1412 / ATCC 700720).